The sequence spans 387 residues: Chaperone protein DnaJ (387 aa).

The J domain occupies 6 to 70; that stretch reads DYYETLGVSR…QKRAAYDQYG (65 aa). The CR-type zinc finger occupies 143 to 225; it reads GKDTKISYDR…CHGTGHEQER (83 aa). Cys156, Cys159, Cys173, Cys176, Cys199, Cys202, Cys213, and Cys216 together coordinate Zn(2+). CXXCXGXG motif repeat units follow at residues 156-163, 173-180, 199-206, and 213-220; these read CHTCNGSG, CHKCHGSG, CDVCGGTG, and CPTCHGTG.

This sequence belongs to the DnaJ family. As to quaternary structure, homodimer. Requires Zn(2+) as cofactor.

Its subcellular location is the cytoplasm. Its function is as follows. Participates actively in the response to hyperosmotic and heat shock by preventing the aggregation of stress-denatured proteins and by disaggregating proteins, also in an autonomous, DnaK-independent fashion. Unfolded proteins bind initially to DnaJ; upon interaction with the DnaJ-bound protein, DnaK hydrolyzes its bound ATP, resulting in the formation of a stable complex. GrpE releases ADP from DnaK; ATP binding to DnaK triggers the release of the substrate protein, thus completing the reaction cycle. Several rounds of ATP-dependent interactions between DnaJ, DnaK and GrpE are required for fully efficient folding. Also involved, together with DnaK and GrpE, in the DNA replication of plasmids through activation of initiation proteins. The protein is Chaperone protein DnaJ of Lacticaseibacillus paracasei (strain ATCC 334 / BCRC 17002 / CCUG 31169 / CIP 107868 / KCTC 3260 / NRRL B-441) (Lactobacillus paracasei).